The following is a 350-amino-acid chain: Melatonin receptor type 1A (350 aa).

The Extracellular portion of the chain corresponds to 1–29 (MQGNGSALPNASQPVLRGDGARPSWLASA). N-linked (GlcNAc...) asparagine glycans are attached at residues N4 and N10. Residues 30–50 (LACVLIFTIVVDILGNLLVIL) form a helical membrane-spanning segment. The Cytoplasmic portion of the chain corresponds to 51–63 (SVYRNKKLRNAGN). Residues 64-84 (IFVVSLAVADLVVAIYPYPLV) traverse the membrane as a helical segment. At 85–102 (LMSIFNNGWNLGYLHCQV) the chain is on the extracellular side. An intrachain disulfide couples C100 to C177. Residues 103-123 (SGFLMGLSVIGSIFNITGIAI) form a helical membrane-spanning segment. Over 124–142 (NRYCYICHSLKYDKLYSSK) the chain is Cytoplasmic. Residues 143–163 (NSLCYVLLIWLLTLAAVLPNL) form a helical membrane-spanning segment. Residues N162 and Q181 each contribute to the melatonin site. Residues 164 to 187 (RAGTLQYDPRIYSCTFAQSVSSAY) lie on the Extracellular side of the membrane. The helical transmembrane segment at 188 to 208 (TIAVVVFHFLVPMIIVIFCYL) threads the bilayer. Residues 209 to 240 (RIWILVLQVRQRVKPDRKPKLKPQDFRNFVTM) are Cytoplasmic-facing. The helical transmembrane segment at 241-261 (FVVFVLFAICWAPLNFIGLAV) threads the bilayer. Residues 262–274 (ASDPASMVPRIPE) lie on the Extracellular side of the membrane. Residues 275 to 295 (WLFVASYYMAYFNSCLNAIIY) form a helical membrane-spanning segment. Topologically, residues 296–350 (GLLNQNFRKEYRRIIVSLCTARVFFVDSSNDVADRVKWKPSPLMTNNNVVKVDSV) are cytoplasmic.

It belongs to the G-protein coupled receptor 1 family. As to expression, expressed in hypophyseal pars tuberalis and hypothalamic suprachiasmatic nuclei (SCN). Hippocampus.

The protein localises to the cell membrane. Functionally, high affinity receptor for melatonin. Likely to mediate the reproductive and circadian actions of melatonin. The activity of this receptor is mediated by pertussis toxin sensitive G proteins that inhibit adenylate cyclase activity. Possibly involved in sleep induction, by melatonin activation of the potassium channel KCNMA1/BK and the dissociation of G-beta and G-gamma subunits, thereby decreasing synaptic transmission. This chain is Melatonin receptor type 1A (MTNR1A), found in Homo sapiens (Human).